The sequence spans 126 residues: Probable DNA-directed RNA polymerase II subunit RPB11 (126 aa).

It belongs to the archaeal Rpo11/eukaryotic RPB11/RPC19 RNA polymerase subunit family. In terms of assembly, component of the RNA polymerase II (Pol II) complex consisting of 12 subunits.

Its subcellular location is the nucleus. Its function is as follows. DNA-dependent RNA polymerase catalyzes the transcription of DNA into RNA using the four ribonucleoside triphosphates as substrates. Component of RNA polymerase II which synthesizes mRNA precursors and many functional non-coding RNAs. Pol II is the central component of the basal RNA polymerase II transcription machinery. It is composed of mobile elements that move relative to each other. RPB11 is part of the core element with the central large cleft. The sequence is that of Probable DNA-directed RNA polymerase II subunit RPB11 from Plasmodium chabaudi chabaudi.